A 392-amino-acid polypeptide reads, in one-letter code: Selenide, water dikinase 1 (392 aa).

Ser-2 is modified (N-acetylserine). Cys-31 is an active-site residue. ATP contacts are provided by residues Lys-32, 67–69, Asp-87, Asp-110, and 161–164; these read GMD and GGQT. Asp-69 provides a ligand contact to Mg(2+). Asp-110 contacts Mg(2+). Asp-265 lines the Mg(2+) pocket.

Belongs to the selenophosphate synthase 1 family. Class II subfamily. As to quaternary structure, homodimer. It depends on Mg(2+) as a cofactor.

Its subcellular location is the cell membrane. It is found in the nucleus membrane. The enzyme catalyses hydrogenselenide + ATP + H2O = selenophosphate + AMP + phosphate + 2 H(+). Its function is as follows. Synthesizes selenophosphate from selenide and ATP. The polypeptide is Selenide, water dikinase 1 (Sephs1) (Mus musculus (Mouse)).